The sequence spans 134 residues: Profilin-2 (134 aa).

Cysteine 13 and cysteine 118 are joined by a disulfide. The Involved in PIP2 interaction motif lies at 84-100 (AVIRGKKGSGGITIKKT). A Phosphothreonine modification is found at threonine 114.

Belongs to the profilin family. Occurs in many kinds of cells as a complex with monomeric actin in a 1:1 ratio. Phosphorylated by MAP kinases.

It is found in the cytoplasm. The protein resides in the cytoskeleton. Its function is as follows. Binds to actin and affects the structure of the cytoskeleton. At high concentrations, profilin prevents the polymerization of actin, whereas it enhances it at low concentrations. This chain is Profilin-2, found in Olea europaea (Common olive).